Reading from the N-terminus, the 224-residue chain is Envelope glycoprotein L (224 aa).

The signal sequence occupies residues 1–22 (MGILGWVGLIAVGVLCVRGGLS). The segment at 20-161 (GLSSTEYVIR…FDYSRTRRCV (142 aa)) is interaction with gH. Positions 20–161 (GLSSTEYVIR…FDYSRTRRCV (142 aa)) are interaction with gL. A gL alphaherpesvirus-type domain is found at 23–201 (STEYVIRSRV…LTTPPPIIAT (179 aa)). Cystine bridges form between C44/C76 and C149/C160. Positions 161–224 (VGRQDLGPTN…RRRRPHSRRL (64 aa)) are disordered. N170 is a glycosylation site (N-linked (GlcNAc...) asparagine; by host). The segment covering 213-224 (KSRRRRPHSRRL) has biased composition (basic residues).

Belongs to the herpesviridae glycoprotein L (gL) family. Alphaherpesvirinae gL subfamily. In terms of assembly, interacts with glycoprotein H (gH); this interaction is necessary for the correct processing and cell surface expression of gH. The heterodimer gH/gL seems to interact with gB trimers during fusion. In terms of processing, N-glycosylated, O-glycosylated, and sialylated.

Its subcellular location is the virion membrane. The protein localises to the host cell membrane. It is found in the host Golgi apparatus. It localises to the host trans-Golgi network. The heterodimer glycoprotein H-glycoprotein L is required for the fusion of viral and plasma membranes leading to virus entry into the host cell. Acts as a functional inhibitor of gH and maintains gH in an inhibited form. Upon binding to host integrins, gL dissociates from gH leading to activation of the viral fusion glycoproteins gB and gH. This is Envelope glycoprotein L from Human herpesvirus 1 (strain KOS) (HHV-1).